The primary structure comprises 188 residues: MILIVGLGNPGKQYEQTRHNIGFDVIDYMANKYNIDVNREKFKGICGEGFIENKKVILLKPLTYMNLSGESIRELANFYKLEDDEIIVVYDDISLDIGRLRIREKGSAGGHNGIKSIIQNLGGDKFPRVKVGVGQPKDNLVNHVLGKFSKEDREHIEKVIPVVSDAIVEIVKNDAKESMNKFNGVNIE.

Position 14 (Y14) interacts with tRNA. H19 functions as the Proton acceptor in the catalytic mechanism. Residues Y64, N66, and N112 each contribute to the tRNA site.

Belongs to the PTH family. As to quaternary structure, monomer.

The protein localises to the cytoplasm. It catalyses the reaction an N-acyl-L-alpha-aminoacyl-tRNA + H2O = an N-acyl-L-amino acid + a tRNA + H(+). Functionally, hydrolyzes ribosome-free peptidyl-tRNAs (with 1 or more amino acids incorporated), which drop off the ribosome during protein synthesis, or as a result of ribosome stalling. In terms of biological role, catalyzes the release of premature peptidyl moieties from peptidyl-tRNA molecules trapped in stalled 50S ribosomal subunits, and thus maintains levels of free tRNAs and 50S ribosomes. The polypeptide is Peptidyl-tRNA hydrolase (Clostridium perfringens (strain ATCC 13124 / DSM 756 / JCM 1290 / NCIMB 6125 / NCTC 8237 / Type A)).